The sequence spans 316 residues: Lipoyl synthase (316 aa).

Residues C66, C71, C77, C92, C96, C99, and S306 each coordinate [4Fe-4S] cluster. Residues Y78 to K295 enclose the Radical SAM core domain.

It belongs to the radical SAM superfamily. Lipoyl synthase family. [4Fe-4S] cluster serves as cofactor.

Its subcellular location is the cytoplasm. The enzyme catalyses [[Fe-S] cluster scaffold protein carrying a second [4Fe-4S](2+) cluster] + N(6)-octanoyl-L-lysyl-[protein] + 2 oxidized [2Fe-2S]-[ferredoxin] + 2 S-adenosyl-L-methionine + 4 H(+) = [[Fe-S] cluster scaffold protein] + N(6)-[(R)-dihydrolipoyl]-L-lysyl-[protein] + 4 Fe(3+) + 2 hydrogen sulfide + 2 5'-deoxyadenosine + 2 L-methionine + 2 reduced [2Fe-2S]-[ferredoxin]. The protein operates within protein modification; protein lipoylation via endogenous pathway; protein N(6)-(lipoyl)lysine from octanoyl-[acyl-carrier-protein]: step 2/2. Its function is as follows. Catalyzes the radical-mediated insertion of two sulfur atoms into the C-6 and C-8 positions of the octanoyl moiety bound to the lipoyl domains of lipoate-dependent enzymes, thereby converting the octanoylated domains into lipoylated derivatives. The protein is Lipoyl synthase of Rhodopirellula baltica (strain DSM 10527 / NCIMB 13988 / SH1).